An 861-amino-acid chain; its full sequence is FO synthase (861 aa).

Radical SAM core domains are found at residues 69-319 and 528-763; these read ITYS…LQAP and VTYI…LLHP. The tract at residues 70–401 is cofG-like; sequence TYSKSVFIPL…PRLLPHVRAL (332 aa). Residues Cys-83, Cys-87, Cys-90, Cys-542, Cys-546, and Cys-549 each coordinate [4Fe-4S] cluster. The tract at residues 505-838 is cofH-like; the sequence is DGPALDALTR…KPRTTLYGEV (334 aa).

In the N-terminal section; belongs to the radical SAM superfamily. CofG family. It in the C-terminal section; belongs to the radical SAM superfamily. CofH family. [4Fe-4S] cluster serves as cofactor.

It catalyses the reaction 5-amino-6-(D-ribitylamino)uracil + L-tyrosine + S-adenosyl-L-methionine = 5-amino-5-(4-hydroxybenzyl)-6-(D-ribitylimino)-5,6-dihydrouracil + 2-iminoacetate + 5'-deoxyadenosine + L-methionine + H(+). It carries out the reaction 5-amino-5-(4-hydroxybenzyl)-6-(D-ribitylimino)-5,6-dihydrouracil + S-adenosyl-L-methionine = 7,8-didemethyl-8-hydroxy-5-deazariboflavin + 5'-deoxyadenosine + L-methionine + NH4(+) + H(+). The protein operates within cofactor biosynthesis; coenzyme F0 biosynthesis. Functionally, catalyzes the radical-mediated synthesis of 7,8-didemethyl-8-hydroxy-5-deazariboflavin (FO) from 5-amino-6-(D-ribitylamino)uracil and L-tyrosine. In Streptomyces avermitilis (strain ATCC 31267 / DSM 46492 / JCM 5070 / NBRC 14893 / NCIMB 12804 / NRRL 8165 / MA-4680), this protein is FO synthase (fbiC).